A 103-amino-acid polypeptide reads, in one-letter code: Small ribosomal subunit protein uS10 (103 aa).

It belongs to the universal ribosomal protein uS10 family. In terms of assembly, part of the 30S ribosomal subunit.

In terms of biological role, involved in the binding of tRNA to the ribosomes. This Xanthomonas axonopodis pv. citri (strain 306) protein is Small ribosomal subunit protein uS10.